Consider the following 560-residue polypeptide: Ribonuclease J 1 (560 aa).

Zn(2+) is bound by residues His-76, His-78, Asp-80, His-81, His-144, and Asp-166. 366–370 is a binding site for substrate; sequence HTSGH. His-392 is a Zn(2+) binding site.

This sequence belongs to the metallo-beta-lactamase superfamily. RNA-metabolizing metallo-beta-lactamase-like family. Bacterial RNase J subfamily. As to quaternary structure, homodimer, may be a subunit of the RNA degradosome. Zn(2+) is required as a cofactor.

It is found in the cytoplasm. Functionally, an RNase that has 5'-3' exonuclease and possibly endonuclease activity. Involved in maturation of rRNA and in some organisms also mRNA maturation and/or decay. Has an overlapping but not completely redundant role with RNase J2 in the decay of mRNA. The polypeptide is Ribonuclease J 1 (Streptococcus pyogenes serotype M3 (strain ATCC BAA-595 / MGAS315)).